Reading from the N-terminus, the 364-residue chain is Histidinol-phosphate aminotransferase 1 (364 aa).

K211 carries the N6-(pyridoxal phosphate)lysine modification.

It belongs to the class-II pyridoxal-phosphate-dependent aminotransferase family. Histidinol-phosphate aminotransferase subfamily. In terms of assembly, homodimer. The cofactor is pyridoxal 5'-phosphate.

It carries out the reaction L-histidinol phosphate + 2-oxoglutarate = 3-(imidazol-4-yl)-2-oxopropyl phosphate + L-glutamate. It participates in amino-acid biosynthesis; L-histidine biosynthesis; L-histidine from 5-phospho-alpha-D-ribose 1-diphosphate: step 7/9. The chain is Histidinol-phosphate aminotransferase 1 from Legionella pneumophila (strain Lens).